A 274-amino-acid polypeptide reads, in one-letter code: Large ribosomal subunit protein uL2 (274 aa).

A disordered region spans residues 221–274; that stretch reads RGTAMNPVDHPHGGGEGRNFGKHPVTPWGVQTKGKKTRSNKRTDKFIVRRRSKK.

This sequence belongs to the universal ribosomal protein uL2 family. As to quaternary structure, part of the 50S ribosomal subunit. Forms a bridge to the 30S subunit in the 70S ribosome.

Its function is as follows. One of the primary rRNA binding proteins. Required for association of the 30S and 50S subunits to form the 70S ribosome, for tRNA binding and peptide bond formation. It has been suggested to have peptidyltransferase activity; this is somewhat controversial. Makes several contacts with the 16S rRNA in the 70S ribosome. The sequence is that of Large ribosomal subunit protein uL2 from Yersinia pseudotuberculosis serotype O:1b (strain IP 31758).